We begin with the raw amino-acid sequence, 248 residues long: Mannose-binding protein C (248 aa).

A signal peptide spans 1–20 (MSLIPSLSLLLMSMVAASYS). The Collagen-like domain maps to 42 to 99 (GINGFPGKDGRDGTKGEKGEPGQGLRGLQGPPGKLGPPGNPGPSGSPGPKGQKGDPGK). The disordered stretch occupies residues 43–107 (INGFPGKDGR…GKSPDCDSSL (65 aa)). A 4-hydroxyproline modification is found at Pro47. Over residues 49–61 (KDGRDGTKGEKGE) the composition is skewed to basic and acidic residues. 4-hydroxyproline is present on residues Pro73, Pro79, Pro82, and Pro88. Residues 75–87 (KLGPPGNPGPSGS) show a composition bias toward pro residues. Over residues 93-102 (QKGDPGKSPD) the composition is skewed to basic and acidic residues. A coiled-coil region spans residues 112 to 130 (RKALQTEMARIKKWLTFSL). In terms of domain architecture, C-type lectin spans 134–245 (VGNKFFLTNG…CSSSHLAVCE (112 aa)). Disulfide bonds link Cys155–Cys244 and Cys222–Cys236.

Oligomeric complex of 3 or more homotrimers. Interacts with MASP1 and MASP2. Interacts with MEP1A and MEP1B and may inhibit their catalytic activity. Hydroxylation on proline residues within the sequence motif, GXPG, is most likely to be 4-hydroxy as this fits the requirement for 4-hydroxylation in vertebrates.

Its subcellular location is the secreted. Calcium-dependent lectin involved in innate immune defense. Binds mannose, fucose and N-acetylglucosamine on different microorganisms and activates the lectin complement pathway. Binds to late apoptotic cells, as well as to apoptotic blebs and to necrotic cells, but not to early apoptotic cells, facilitating their uptake by macrophages. This Hylobates lar (Lar gibbon) protein is Mannose-binding protein C (MBL2).